Here is a 272-residue protein sequence, read N- to C-terminus: Indole-3-glycerol phosphate synthase (272 aa).

Belongs to the TrpC family.

The enzyme catalyses 1-(2-carboxyphenylamino)-1-deoxy-D-ribulose 5-phosphate + H(+) = (1S,2R)-1-C-(indol-3-yl)glycerol 3-phosphate + CO2 + H2O. It functions in the pathway amino-acid biosynthesis; L-tryptophan biosynthesis; L-tryptophan from chorismate: step 4/5. This Mycobacteroides abscessus (strain ATCC 19977 / DSM 44196 / CCUG 20993 / CIP 104536 / JCM 13569 / NCTC 13031 / TMC 1543 / L948) (Mycobacterium abscessus) protein is Indole-3-glycerol phosphate synthase.